Consider the following 247-residue polypeptide: Small ribosomal subunit protein eS6 (247 aa).

A disordered region spans residues A194–K247. Basic and acidic residues predominate over residues R217–K247.

The protein belongs to the eukaryotic ribosomal protein eS6 family. Post-translationally, ribosomal protein S6 is the major substrate of protein kinases in eukaryote ribosomes.

Functionally, component of the 40S small ribosomal subunit. Plays an important role in controlling cell growth and proliferation through the selective translation of particular classes of mRNA. In Aplysia californica (California sea hare), this protein is Small ribosomal subunit protein eS6 (RPS6).